The sequence spans 260 residues: MTALSRFPRFFVTSPSPCPYLPGRQERKIFTELSGQQAGELNDALSRIGFRRSQSVAYRPSCAGCTACVSVRVVTEGFQPNATQRKLLKRYGDLEVTACKPWATGEQYELLKRYLDSRHPGGGMAAMDESDYADMVEQSPVSSYVIEYREPSVNGERGRLVGACITDQQGDGLSMIYSYFVTDDEARPGMGNFIIMDHILRARAAGLPYVYLGYWVKGSARMAYKTRYRPIEVLGPTGWALLEDEDMVGAMPSAVAAALA.

Belongs to the R-transferase family. Bpt subfamily.

It is found in the cytoplasm. It catalyses the reaction N-terminal L-glutamyl-[protein] + L-leucyl-tRNA(Leu) = N-terminal L-leucyl-L-glutamyl-[protein] + tRNA(Leu) + H(+). The enzyme catalyses N-terminal L-aspartyl-[protein] + L-leucyl-tRNA(Leu) = N-terminal L-leucyl-L-aspartyl-[protein] + tRNA(Leu) + H(+). Functionally, functions in the N-end rule pathway of protein degradation where it conjugates Leu from its aminoacyl-tRNA to the N-termini of proteins containing an N-terminal aspartate or glutamate. The sequence is that of Aspartate/glutamate leucyltransferase from Sphingomonas elodea.